Here is a 280-residue protein sequence, read N- to C-terminus: Pantothenate synthetase (280 aa).

ATP is bound at residue 30 to 37 (MGALHEGH). The Proton donor role is filled by His37. (R)-pantoate is bound at residue Gln61. Gln61 provides a ligand contact to beta-alanine. 147 to 150 (GQKD) lines the ATP pocket. Residue Gln153 coordinates (R)-pantoate. Residues Val176 and 184–187 (MSSR) each bind ATP.

It belongs to the pantothenate synthetase family. As to quaternary structure, homodimer.

Its subcellular location is the cytoplasm. The enzyme catalyses (R)-pantoate + beta-alanine + ATP = (R)-pantothenate + AMP + diphosphate + H(+). It participates in cofactor biosynthesis; (R)-pantothenate biosynthesis; (R)-pantothenate from (R)-pantoate and beta-alanine: step 1/1. In terms of biological role, catalyzes the condensation of pantoate with beta-alanine in an ATP-dependent reaction via a pantoyl-adenylate intermediate. The sequence is that of Pantothenate synthetase from Thermodesulfovibrio yellowstonii (strain ATCC 51303 / DSM 11347 / YP87).